A 154-amino-acid polypeptide reads, in one-letter code: Aspartate carbamoyltransferase regulatory chain (154 aa).

Zn(2+) contacts are provided by Cys-109, Cys-114, Cys-138, and Cys-141.

The protein belongs to the PyrI family. In terms of assembly, contains catalytic and regulatory chains. Zn(2+) is required as a cofactor.

Functionally, involved in allosteric regulation of aspartate carbamoyltransferase. The sequence is that of Aspartate carbamoyltransferase regulatory chain from Sodalis glossinidius (strain morsitans).